Reading from the N-terminus, the 531-residue chain is Acid-sensing ion channel 3 (531 aa).

Residues 1 to 43 (MKPTSGPEEARRPASDIRVFASNCSMHGLGHVFGPGSLSLRRG) lie on the Cytoplasmic side of the membrane. The helical transmembrane segment at 44–61 (MWAAAVVLSVATFLYQVA) threads the bilayer. The Extracellular portion of the chain corresponds to 62–441 (ERVRYYREFH…SELLGDIGGQ (380 aa)). Intrachain disulfides connect Cys-92/Cys-186, Cys-164/Cys-171, Cys-282/Cys-370, Cys-315/Cys-366, Cys-319/Cys-364, Cys-328/Cys-350, and Cys-330/Cys-342. Asn-175 carries an N-linked (GlcNAc...) asparagine glycan. Residues 285 to 307 (ASLNPNYEPEPSDPLGSPSPSPS) are disordered. Asn-398 carries an N-linked (GlcNAc...) asparagine glycan. A helical membrane pass occupies residues 442–460 (MGLFIGASLLTILEILDYL). Positions 447 to 449 (GAS) match the GAS motif; ion selectivity filter motif. Over 461–531 (CEVFRDKVLG…HRTCYLVTQL (71 aa)) the chain is Cytoplasmic. A PDZ-binding motif is present at residues 528–531 (VTQL).

This sequence belongs to the amiloride-sensitive sodium channel (TC 1.A.6) family. ASIC3 subfamily. In terms of assembly, can form homotrimeric channels. Heterotrimer; forms functional heterotrimers producing channel with different properties. Forms heterotrimers with ASIC2; gives rise to a biphasic current with a sustained current which discriminates poorly between Na(+) and K(+). Interacts with STOM; inhibits ASIC3 acid-evoked current. Interacts with LIN7B (via PDZ domain); increases ASIC3 expression at the plasma membrane. Interacts with MAGI1 (via PDZ domain); probably regulates ASIC3. Interacts with GOPC (via PDZ domain); probably regulates ASIC3. Interacts with DLG4 (via PDZ domain); reduces ASIC3 expression at the plasma membrane. As to expression, expressed by sensory neurons. Strongly expressed in brain, spinal cord, lung, lymph nodes, kidney, pituitary, heart and testis.

The protein localises to the cell membrane. It is found in the cytoplasm. It carries out the reaction Na(+)(in) = Na(+)(out). The enzyme catalyses K(+)(in) = K(+)(out). The catalysed reaction is Ca(2+)(in) = Ca(2+)(out). Its activity is regulated as follows. Inhibited by the diuretic drug amiloride. Inhibited by the diuretic drug triamterene. Potentiated by the vertebrate neuropeptide FF (NPFF) and the related FMRFamide. Specifically and reversibly inhibited by the a sea anemone toxin APETx2. Functionally, forms pH-gated heterotrimeric sodium channels that act as postsynaptic excitatory receptors in the nervous system. Upon extracellular acidification, these channels generate a biphasic current with a fast inactivating and a slow sustained phase. ASIC3 is more sensitive to protons and gates between closed, open, and desensitized states faster than other ASICs. Displays high selectivity for sodium ions but can also permit the permeation of other cations. As a neuronal acid sensor, probably contributes to mechanoreception, acid nociception, and heat nociception. By forming heterotrimeric channels with ASIC2, generates a biphasic current with a fast inactivating and a slow sustained phase, which in sensory neurons is proposed to mediate the pain induced by acidosis that occurs in ischemic, damaged or inflamed tissues. This is Acid-sensing ion channel 3 from Homo sapiens (Human).